The sequence spans 301 residues: Probable alpha-L-glutamate ligase (301 aa).

The 184-residue stretch at 104 to 287 folds into the ATP-grasp domain; that stretch reads LQLLSRRGIG…VAGMIIEHLE (184 aa). ATP-binding positions include lysine 141, 178–179, aspartate 187, and 211–213; these read EY and RSN. Mg(2+) contacts are provided by aspartate 248, glutamate 260, and asparagine 262. Mn(2+) contacts are provided by aspartate 248, glutamate 260, and asparagine 262.

This sequence belongs to the RimK family. The cofactor is Mg(2+). Mn(2+) is required as a cofactor.

The protein is Probable alpha-L-glutamate ligase of Pseudomonas putida (strain W619).